The sequence spans 429 residues: Zinc finger protein 385C (429 aa).

A Matrin-type 1 zinc finger spans residues 77-107 (ISCNICHLRFNSANQAEAHYKGHRHARKLKA). Disordered stretches follow at residues 109–224 (EAAK…GRGE), 258–295 (GHQG…GPSP), and 311–340 (QLKQ…NKLQ). The segment covering 125 to 146 (TVVSSASPPASGSPGTPQSKGP) has biased composition (low complexity). A compositionally biased stretch (pro residues) spans 147 to 162 (ASPPLGPSLQLPPTPD). The segment covering 181-193 (CDAAASSSSSSCP) has biased composition (low complexity). The Matrin-type 2 zinc-finger motif lies at 225–259 (KGRLYCPTCKVTVNSASQLQAHNTGAKHRWMVEGH). Over residues 262-284 (APRRGRGRPVSRGGTGHKTKRVI) the composition is skewed to basic residues. The Matrin-type 3 zinc-finger motif lies at 297-327 (FHCALCQLHVNSETQLKQHMSSRRHKDRLAG).

It is found in the nucleus. The protein is Zinc finger protein 385C of Mus musculus (Mouse).